Reading from the N-terminus, the 435-residue chain is AP-2 complex subunit mu (435 aa).

Position 45 is a phosphoserine (Ser45). Thr156 bears the Phosphothreonine mark. An MHD domain is found at 170–434; the sequence is RNELFLDVLE…IGRSGIYETR (265 aa). Residues Lys341, Lys345, and Lys354 each contribute to the a 1,2-diacyl-sn-glycero-3-phospho-(1D-myo-inositol-3,4,5-trisphosphate) site.

The protein belongs to the adaptor complexes medium subunit family. Adaptor protein complex 2 (AP-2) is a heterotetramer composed of two large adaptins (alpha-type subunit AP2A1 or AP2A2 and beta-type subunit AP2B1), a medium adaptin (mu-type subunit AP2M1) and a small adaptin (sigma-type subunit AP2S1). Interacts with ATP6V1H and MEGF10. Interacts with EGFR. Interacts with PIP5K1C; tyrosine phosphorylation of PIP5K1C weakens the interaction. Interacts with KIAA0319; required for clathrin-mediated endocytosis of KIAA0319. Interacts with DVL2 (via DEP domain). Interacts with KCNQ1; mediates estrogen-induced internalization via clathrin-coated vesicles. Together with AP2A1 or AP2A2 and AP2B1, it interacts with ADAM10; this interaction facilitates ADAM10 endocytosis from the plasma membrane during long-term potentiation in hippocampal neurons. Probably interacts with ACE2 (via endocytic sorting signal motif); the interaction is inhibited by ACE2 phosphorylation. Interacts with RALBP1; the interaction is direct. Interacts with TMEM106B (via N-terminus). In terms of processing, phosphorylation at Thr-156 increases the affinity of the AP-2 complex for cargo membrane proteins during the initial stages of endocytosis.

The protein resides in the cell membrane. Its subcellular location is the membrane. The protein localises to the coated pit. Its function is as follows. Component of the adaptor protein complex 2 (AP-2). Adaptor protein complexes function in protein transport via transport vesicles in different membrane traffic pathways. Adaptor protein complexes are vesicle coat components and appear to be involved in cargo selection and vesicle formation. AP-2 is involved in clathrin-dependent endocytosis in which cargo proteins are incorporated into vesicles surrounded by clathrin (clathrin-coated vesicles, CCVs) which are destined for fusion with the early endosome. The clathrin lattice serves as a mechanical scaffold but is itself unable to bind directly to membrane components. Clathrin-associated adaptor protein (AP) complexes which can bind directly to both the clathrin lattice and to the lipid and protein components of membranes are considered to be the major clathrin adaptors contributing the CCV formation. AP-2 also serves as a cargo receptor to selectively sort the membrane proteins involved in receptor-mediated endocytosis. AP-2 seems to play a role in the recycling of synaptic vesicle membranes from the presynaptic surface. AP-2 recognizes Y-X-X-[FILMV] (Y-X-X-Phi) and [ED]-X-X-X-L-[LI] endocytosis signal motifs within the cytosolic tails of transmembrane cargo molecules. AP-2 may also play a role in maintaining normal post-endocytic trafficking through the ARF6-regulated, non-clathrin pathway. During long-term potentiation in hippocampal neurons, AP-2 is responsible for the endocytosis of ADAM10. The AP-2 mu subunit binds to transmembrane cargo proteins; it recognizes the Y-X-X-Phi motifs. The surface region interacting with to the Y-X-X-Phi motif is inaccessible in cytosolic AP-2, but becomes accessible through a conformational change following phosphorylation of AP-2 mu subunit at Thr-156 in membrane-associated AP-2. The membrane-specific phosphorylation event appears to involve assembled clathrin which activates the AP-2 mu kinase AAK1. Plays a role in endocytosis of frizzled family members upon Wnt signaling. The sequence is that of AP-2 complex subunit mu (AP2M1) from Pongo abelii (Sumatran orangutan).